The following is a 179-amino-acid chain: ATP-dependent protease subunit HslV (179 aa).

The active site involves Thr-7. The Na(+) site is built by Gly-162, Cys-165, and Thr-168.

This sequence belongs to the peptidase T1B family. HslV subfamily. A double ring-shaped homohexamer of HslV is capped on each side by a ring-shaped HslU homohexamer. The assembly of the HslU/HslV complex is dependent on binding of ATP.

Its subcellular location is the cytoplasm. It carries out the reaction ATP-dependent cleavage of peptide bonds with broad specificity.. With respect to regulation, allosterically activated by HslU binding. In terms of biological role, protease subunit of a proteasome-like degradation complex believed to be a general protein degrading machinery. In Bordetella bronchiseptica (strain ATCC BAA-588 / NCTC 13252 / RB50) (Alcaligenes bronchisepticus), this protein is ATP-dependent protease subunit HslV.